We begin with the raw amino-acid sequence, 156 residues long: MKTISLVYISLSGNTESFVTRLKDYLLSQYKGIEVQKIHIKDLVKEGKNFYEMDHPYVAFLPTYLEGGNGVDNGDVEILTTPVGDFIAYGNNASKCFGVVGSGNRNFNNQYCLTAKQYSQRFGFPVLADFEMRGMLEDIKHVAAIIADLYELEKEN.

This sequence belongs to the NrdI family.

The polypeptide is Putative NrdI-like protein (Streptococcus pneumoniae serotype 4 (strain ATCC BAA-334 / TIGR4)).